Consider the following 353-residue polypeptide: Phenol hydroxylase P5 protein (353 aa).

One can recognise a 2Fe-2S ferredoxin-type domain in the interval 3-93; the sequence is YQVTIEPIGT…DMVIEADVDE (91 aa). Residues Cys-37, Cys-42, Cys-45, and Cys-77 each coordinate [2Fe-2S] cluster. Residues 102–201 form the FAD-binding FR-type domain; it reads VQDYQATVIE…SGPYGQFFVR (100 aa).

As to quaternary structure, the multicomponent enzyme phenol hydroxylase is formed by P0, P1, P2, P3, P4 and P5 polypeptides. Requires FAD as cofactor. [2Fe-2S] cluster is required as a cofactor.

It catalyses the reaction phenol + NADPH + O2 + H(+) = catechol + NADP(+) + H2O. It functions in the pathway aromatic compound metabolism; phenol degradation. Its function is as follows. Catabolizes phenol, and some of its methylated derivatives. P5 is required for growth on phenol, and for in vitro phenol hydroxylase activity. Probable electron transfer from NADPH, via FAD and the 2Fe-2S center, to the oxygenase activity site of the enzyme. This Acinetobacter pittii (strain PHEA-2) protein is Phenol hydroxylase P5 protein (mphP).